A 234-amino-acid chain; its full sequence is Sugar fermentation stimulation protein homolog (234 aa).

The protein belongs to the SfsA family.

The sequence is that of Sugar fermentation stimulation protein homolog from Shewanella halifaxensis (strain HAW-EB4).